We begin with the raw amino-acid sequence, 585 residues long: Probable inactive serine/threonine-protein kinase slob1 (585 aa).

Residues 21 to 82 (DQSSLECNDC…LCRSCNNSFE (62 aa)) form an FYVE-type zinc finger. Residues Cys-27, Cys-30, Cys-43, Cys-46, Cys-51, Cys-54, Cys-74, and Cys-77 each contribute to the Zn(2+) site. One can recognise a Protein kinase domain in the interval 108–478 (SKPLQDIGHT…STSLLNNSFN (371 aa)). Composition is skewed to low complexity over residues 426–456 (ISKLSSSSSNNNSNNNNNNNNNSNTFNNISS) and 466–503 (LPSSTSLLNNSFNLSNNNNPSSPSTSTISPNSSLISSP). Positions 426–585 (ISKLSSSSSN…SLKPSSTKKK (160 aa)) are disordered. The span at 513–532 (TPPPPPPPPKSAPPPPPPPS) shows a compositional bias: pro residues. Residues 533–542 (SSKLPPSSSS) are compositionally biased toward low complexity. The WH2 domain maps to 542-562 (SRNSLLESIRNADNAKKLKKT).

The protein belongs to the protein kinase superfamily. Ser/Thr protein kinase family.

The sequence is that of Probable inactive serine/threonine-protein kinase slob1 (slob1) from Dictyostelium discoideum (Social amoeba).